A 125-amino-acid polypeptide reads, in one-letter code: uncharacterized protein (125 aa).

The stretch at N5–V33 forms a coiled coil. Disordered stretches follow at residues N22–E50 and F96–Q125. 2 stretches are compositionally biased toward basic and acidic residues: residues E39 to E50 and F96 to L112. The span at S113–Q125 shows a compositional bias: basic residues.

Belongs to the herpesviridae BLRF2 family.

This is an uncharacterized protein from Connochaetes taurinus (Blue wildebeest).